A 600-amino-acid polypeptide reads, in one-letter code: DNA mismatch repair protein MutL (600 aa).

A disordered region spans residues 348 to 375 (QPQAQRPQTAWSAETSPFRPYQPTTGFS). Residues 349–362 (PQAQRPQTAWSAET) show a composition bias toward polar residues.

The protein belongs to the DNA mismatch repair MutL/HexB family.

This protein is involved in the repair of mismatches in DNA. It is required for dam-dependent methyl-directed DNA mismatch repair. May act as a 'molecular matchmaker', a protein that promotes the formation of a stable complex between two or more DNA-binding proteins in an ATP-dependent manner without itself being part of a final effector complex. The sequence is that of DNA mismatch repair protein MutL from Rhizobium leguminosarum bv. trifolii (strain WSM2304).